A 380-amino-acid polypeptide reads, in one-letter code: Anhydro-N-acetylmuramic acid kinase (380 aa).

ATP is bound at residue Gly9 to Asp16.

Belongs to the anhydro-N-acetylmuramic acid kinase family.

It carries out the reaction 1,6-anhydro-N-acetyl-beta-muramate + ATP + H2O = N-acetyl-D-muramate 6-phosphate + ADP + H(+). It participates in amino-sugar metabolism; 1,6-anhydro-N-acetylmuramate degradation. Its pathway is cell wall biogenesis; peptidoglycan recycling. Its function is as follows. Catalyzes the specific phosphorylation of 1,6-anhydro-N-acetylmuramic acid (anhMurNAc) with the simultaneous cleavage of the 1,6-anhydro ring, generating MurNAc-6-P. Is required for the utilization of anhMurNAc either imported from the medium or derived from its own cell wall murein, and thus plays a role in cell wall recycling. This chain is Anhydro-N-acetylmuramic acid kinase, found in Cyanothece sp. (strain PCC 7425 / ATCC 29141).